Consider the following 132-residue polypeptide: Protein KRTCAP2 homolog (132 aa).

4 helical membrane passes run 1 to 21 (MAVPTSVSLVLASVTAVLIFS), 35 to 55 (MATVFGGFLGSWLFILSLTAV), 69 to 89 (AKLFPEVAFCLIGSLFACGMV), and 92 to 109 (VCATTCILFSVAALYYIN).

It belongs to the KRTCAP2 family. In terms of assembly, component of the oligosaccharyltransferase (OST) complex.

It is found in the membrane. Functionally, subunit of the oligosaccharyl transferase (OST) complex that catalyzes the initial transfer of a defined glycan (Glc(3)Man(9)GlcNAc(2) in eukaryotes) from the lipid carrier dolichol-pyrophosphate to an asparagine residue within an Asn-X-Ser/Thr consensus motif in nascent polypeptide chains, the first step in protein N-glycosylation. N-glycosylation occurs cotranslationally and the complex associates with the Sec61 complex at the channel-forming translocon complex that mediates protein translocation across the endoplasmic reticulum (ER). All subunits are required for a maximal enzyme activity. The protein is Protein KRTCAP2 homolog of Aedes aegypti (Yellowfever mosquito).